Reading from the N-terminus, the 759-residue chain is Protein YdeP (759 aa).

2 residues coordinate [4Fe-4S] cluster: Cys49 and Cys52.

This sequence belongs to the prokaryotic molybdopterin-containing oxidoreductase family. [4Fe-4S] cluster is required as a cofactor. The cofactor is Mo-bis(molybdopterin guanine dinucleotide).

Probably involved in acid resistance. In Shigella flexneri, this protein is Protein YdeP (ydeP).